A 301-amino-acid polypeptide reads, in one-letter code: Acetylglutamate kinase (301 aa).

Residues glycine 72–glycine 73, arginine 94, and asparagine 199 contribute to the substrate site.

Belongs to the acetylglutamate kinase family. ArgB subfamily.

It is found in the cytoplasm. It carries out the reaction N-acetyl-L-glutamate + ATP = N-acetyl-L-glutamyl 5-phosphate + ADP. It participates in amino-acid biosynthesis; L-arginine biosynthesis; N(2)-acetyl-L-ornithine from L-glutamate: step 2/4. In terms of biological role, catalyzes the ATP-dependent phosphorylation of N-acetyl-L-glutamate. The chain is Acetylglutamate kinase from Bartonella quintana (strain Toulouse) (Rochalimaea quintana).